A 331-amino-acid chain; its full sequence is DNA fragmentation factor subunit alpha (331 aa).

Methionine 1 is subject to N-acetylmethionine. The region spanning 17–96 (PLKPCLLRRN…ALACNEKWIY (80 aa)) is the CIDE-N domain. Threonine 243 carries the post-translational modification Phosphothreonine. The disordered stretch occupies residues 306–331 (LRNLSARRSPLPGEPQRPKRAKRDSS).

As to quaternary structure, heterodimer of DFFA and DFFB. Post-translationally, caspase-3 cleaves DFF45 at 2 sites to generate an active factor.

Its subcellular location is the cytoplasm. Its function is as follows. Inhibitor of the caspase-activated DNase (DFF40). The protein is DNA fragmentation factor subunit alpha (Dffa) of Mus musculus (Mouse).